Consider the following 463-residue polypeptide: 6-phosphofructo-2-kinase/fructose-2,6-bisphosphatase 3 (463 aa).

Positions 1–246 (MPLELTQSRV…VYYLMNIHWQ (246 aa)) are 6-phosphofructo-2-kinase. 42-50 (GLPARGKTY) is an ATP binding site. Residues arginine 75 and arginine 99 each coordinate beta-D-fructose 6-phosphate. Aspartate 125 is an active-site residue. Beta-D-fructose 6-phosphate contacts are provided by threonine 127 and arginine 133. The active site involves cysteine 155. 164 to 169 (NIMEVK) provides a ligand contact to ATP. Beta-D-fructose 6-phosphate is bound by residues lysine 169, arginine 191, and tyrosine 195. Residues 247–463 (PRTIYLCRHG…PNPLMRSNSH (217 aa)) form a fructose-2,6-bisphosphatase region. Position 254 (arginine 254) interacts with beta-D-fructose 2,6-bisphosphate. Catalysis depends on histidine 255, which acts as the Tele-phosphohistidine intermediate. Asparagine 261 and glycine 267 together coordinate beta-D-fructose 2,6-bisphosphate. Catalysis depends on glutamate 324, which acts as the Proton donor/acceptor. Position 335 (tyrosine 335) interacts with beta-D-fructose 2,6-bisphosphate. 346–349 (YALA) serves as a coordination point for ATP. Lysine 353, tyrosine 364, and glutamine 390 together coordinate beta-D-fructose 2,6-bisphosphate. Residues 390–394 (QAVCV) and tyrosine 426 each bind ATP. A disordered region spans residues 444–463 (RERSEDAKKGPNPLMRSNSH). Serine 462 is modified (phosphoserine; by AMPK and PKA).

This sequence in the C-terminal section; belongs to the phosphoglycerate mutase family. As to quaternary structure, homodimer. Forms a heterodimer with PFKFB2. In terms of processing, phosphorylation by AMPK stimulates activity. In terms of tissue distribution, brain.

The enzyme catalyses beta-D-fructose 2,6-bisphosphate + H2O = beta-D-fructose 6-phosphate + phosphate. It carries out the reaction beta-D-fructose 6-phosphate + ATP = beta-D-fructose 2,6-bisphosphate + ADP + H(+). Catalyzes both the synthesis and degradation of fructose 2,6-bisphosphate. This chain is 6-phosphofructo-2-kinase/fructose-2,6-bisphosphatase 3 (PFKFB3), found in Bos taurus (Bovine).